A 310-amino-acid chain; its full sequence is Upstream stimulatory factor 1 (310 aa).

Over residues 1-17 (MKGQQKTAETEEGTVQI) the composition is skewed to polar residues. 2 disordered regions span residues 1–26 (MKGQQKTAETEEGTVQIQEGAVATGE) and 171–209 (QGGSQRSIAPRTHPYSPKSEAPRTTRDEKRRAQHNEVER). Basic and acidic residues predominate over residues 190–209 (EAPRTTRDEKRRAQHNEVER). Residues 199-254 (KRRAQHNEVERRRRDKINNWIVQLSKIIPDCSMESTKSGQSKGGILSKACDYIQEL) enclose the bHLH domain. Residues 271-292 (LQLDNDVLRQQVEDLKNKNLLL) form a leucine-zipper region. Residue lysine 306 forms a Glycyl lysine isopeptide (Lys-Gly) (interchain with G-Cter in SUMO2) linkage.

As to quaternary structure, efficient DNA binding requires dimerization with another bHLH protein. Binds DNA as a homodimer or a heterodimer (USF1/USF2).

Its subcellular location is the nucleus. In terms of biological role, transcription factor that binds to a symmetrical DNA sequence (E-boxes) (5'-CACGTG-3') that is found in a variety of viral and cellular promoters. This is Upstream stimulatory factor 1 (USF1) from Bos taurus (Bovine).